Here is a 1113-residue protein sequence, read N- to C-terminus: uncharacterized protein (1113 aa).

Residue 313–320 coordinates ATP; it reads GPPGTGKS.

It belongs to the DNA2/NAM7 helicase family.

This is an uncharacterized protein from Mycoplasma genitalium (strain ATCC 33530 / DSM 19775 / NCTC 10195 / G37) (Mycoplasmoides genitalium).